Reading from the N-terminus, the 134-residue chain is Arsenate reductase 2 (134 aa).

Residues Cys11, Cys83, and Cys90 each act as nucleophile in the active site. Disulfide bonds link Cys11/Cys83 and Cys83/Cys90.

This sequence belongs to the low molecular weight phosphotyrosine protein phosphatase family. Thioredoxin-coupled ArsC subfamily.

The protein resides in the cytoplasm. The catalysed reaction is arsenate + [thioredoxin]-dithiol + H(+) = arsenite + [thioredoxin]-disulfide + H2O. Catalyzes the reduction of arsenate [As(V)] to arsenite [As(III)]. The sequence is that of Arsenate reductase 2 from Bacillus cereus (strain ATCC 10987 / NRS 248).